The following is a 152-amino-acid chain: Atypical leghemoglobin 2-1 (152 aa).

In terms of domain architecture, Globin spans 3-152 (TFSEEQEALV…LAGVIKKGMS (150 aa)). Position 31 is a nitrated tyrosine (Tyr31). Residue Ser46 coordinates heme b. Ser46 is subject to Phosphoserine. His64 provides a ligand contact to O2. 3 residues coordinate heme b: Lys67, His99, and Arg102. Tyr140 is modified (nitrated tyrosine).

Belongs to the plant globin family. In terms of assembly, monomer. Post-translationally, nitrated in effective nodules and particularly in hypoxic conditions; this mechanism may play a protective role in the symbiosis by buffering toxic peroxynitrite NO(2)(-). Nitration level decrease during nodule senescence. Phosphorylation at Ser-46 disrupts the molecular environment of its porphyrin ring oxygen binding pocket, thus leading to a reduced oxygen consumption and to the delivery of oxygen O(2) to symbiosomes. As to expression, mainly expressed in leaves and, at low levels, in roots of non-nodulated plants. However, accumulates also in nodules and roots, and, to a lower extent, in leaves, stems, flowers and fruits, in nodulated plants.

In terms of biological role, atypical leghemoglobin that reversibly binds oxygen O(2) through a pentacoordinated heme iron. In nodules, facilitates the diffusion of oxygen to the bacteroids while preventing the bacterial nitrogenase from being inactivated by buffering dioxygen, nitric oxide and carbon monoxide. This role is essential for symbiotic nitrogen fixation (SNF). Seems not restricted to symbiotic nitrogen fixation and root nodules formation, but also contributes to general plant development and metabolism. The protein is Atypical leghemoglobin 2-1 of Lotus japonicus (Lotus corniculatus var. japonicus).